Here is a 313-residue protein sequence, read N- to C-terminus: Olfactory receptor 4M1 (313 aa).

Residues M1–L25 are Extracellular-facing. N-linked (GlcNAc...) asparagine glycosylation occurs at N5. Residues V26–I49 traverse the membrane as a helical segment. Residues R50–S57 are Cytoplasmic-facing. A helical membrane pass occupies residues P58–P79. Topologically, residues K80 to Q100 are extracellular. An intrachain disulfide couples C97 to C189. Residues L101–Y120 traverse the membrane as a helical segment. Topologically, residues D121–R139 are cytoplasmic. A helical membrane pass occupies residues L140–I158. Topologically, residues Q159 to E195 are extracellular. The helical transmembrane segment at E196 to A219 threads the bilayer. Residues F220–R237 are Cytoplasmic-facing. The helical transmembrane segment at A238–Y260 threads the bilayer. Residues A261–K271 lie on the Extracellular side of the membrane. Residues V272 to L291 form a helical membrane-spanning segment. Residues R292–K313 are Cytoplasmic-facing.

Belongs to the G-protein coupled receptor 1 family. As to expression, highly expressed in the testis and olfactory bulb.

The protein resides in the cell membrane. Functionally, olfactory receptor that acts as a receptor of Asprosin hormone, potentially at the surface of hepatocytes and may help to promote hepatocyte glucose release. The protein is Olfactory receptor 4M1 of Homo sapiens (Human).